A 359-amino-acid chain; its full sequence is DNA replication and repair protein RecF (359 aa).

30 to 37 (GANGSGKT) provides a ligand contact to ATP.

The protein belongs to the RecF family.

Its subcellular location is the cytoplasm. Its function is as follows. The RecF protein is involved in DNA metabolism; it is required for DNA replication and normal SOS inducibility. RecF binds preferentially to single-stranded, linear DNA. It also seems to bind ATP. In Vibrio atlanticus (strain LGP32) (Vibrio splendidus (strain Mel32)), this protein is DNA replication and repair protein RecF.